Consider the following 238-residue polypeptide: MRPNNRANNQVREIKITRNYTRYAEGSVLIEFGETKVLCNATVEESVPRFLKGQQQGWVTAEYGMLPRATHSRTQREAAKGKQGGRTMEIQRLIARSLRAVVDLKALGERTVTVDCDVIQADGGTRTASITGACVALYDAMNKLVANGTLKTNPMKGLVAAISVGIVAGEAVCDLEYLEDSNAETDMNVVMVQDGRLVEVQGTAEGEPFSHQELLTLLDLAKQGISQLVEAQRKALAE.

Phosphate-binding positions include arginine 86 and 124–126; that span reads GTR.

It belongs to the RNase PH family. As to quaternary structure, homohexameric ring arranged as a trimer of dimers.

It catalyses the reaction tRNA(n+1) + phosphate = tRNA(n) + a ribonucleoside 5'-diphosphate. Phosphorolytic 3'-5' exoribonuclease that plays an important role in tRNA 3'-end maturation. Removes nucleotide residues following the 3'-CCA terminus of tRNAs; can also add nucleotides to the ends of RNA molecules by using nucleoside diphosphates as substrates, but this may not be physiologically important. Probably plays a role in initiation of 16S rRNA degradation (leading to ribosome degradation) during starvation. The chain is Ribonuclease PH from Mannheimia haemolytica (Pasteurella haemolytica).